The sequence spans 305 residues: Recombination-associated protein RdgC (305 aa).

Belongs to the RdgC family.

The protein localises to the cytoplasm. Its subcellular location is the nucleoid. May be involved in recombination. This is Recombination-associated protein RdgC from Sodalis glossinidius (strain morsitans).